A 269-amino-acid chain; its full sequence is 3-methyl-2-oxobutanoate hydroxymethyltransferase (269 aa).

Residues Asp-50 and Asp-89 each coordinate Mg(2+). 3-methyl-2-oxobutanoate contacts are provided by residues 50 to 51, Asp-89, and Lys-118; that span reads DS. Glu-120 is a Mg(2+) binding site. Glu-187 functions as the Proton acceptor in the catalytic mechanism.

This sequence belongs to the PanB family. Homodecamer; pentamer of dimers. Mg(2+) is required as a cofactor.

The protein resides in the cytoplasm. It catalyses the reaction 3-methyl-2-oxobutanoate + (6R)-5,10-methylene-5,6,7,8-tetrahydrofolate + H2O = 2-dehydropantoate + (6S)-5,6,7,8-tetrahydrofolate. Its pathway is cofactor biosynthesis; (R)-pantothenate biosynthesis; (R)-pantoate from 3-methyl-2-oxobutanoate: step 1/2. Catalyzes the reversible reaction in which hydroxymethyl group from 5,10-methylenetetrahydrofolate is transferred onto alpha-ketoisovalerate to form ketopantoate. This chain is 3-methyl-2-oxobutanoate hydroxymethyltransferase, found in Nitrosomonas eutropha (strain DSM 101675 / C91 / Nm57).